The sequence spans 347 residues: Photosystem II assembly protein Ycf48 (347 aa).

The signal sequence occupies residues 1-38; that stretch reads MFAKQIDIHWQKMKGIKFLHWLLGTVLLWVSLSTPALA. Residues 202-226 carry the Arg-rich patch motif; that stretch reads RGSFYSTWEPGQTAWEPHNRTTSRR.

Belongs to the Ycf48 family. In terms of assembly, interacts with the D1 protein (crystallized with PsbA1 or PsbA3), via the latter's C-terminal prepropeptide, may interact with parts of the mature D1 protein as well.

It localises to the cellular thylakoid lumen. Functionally, a factor required for optimal assembly of photosystem II (PSII), acting in the early stages of PSII assembly. Also plays a role in replacement of photodamaged D1 (psbA). Assists YidC in synthesis of chlorophyll-binding proteins. The polypeptide is Photosystem II assembly protein Ycf48 (Thermosynechococcus vestitus (strain NIES-2133 / IAM M-273 / BP-1)).